The chain runs to 102 residues: Small ribosomal subunit protein uS10 (102 aa).

Belongs to the universal ribosomal protein uS10 family. As to quaternary structure, part of the 30S ribosomal subunit.

In terms of biological role, involved in the binding of tRNA to the ribosomes. This Streptococcus pyogenes serotype M3 (strain SSI-1) protein is Small ribosomal subunit protein uS10.